The primary structure comprises 1564 residues: Tetratricopeptide repeat protein 37 (1564 aa).

TPR repeat units lie at residues 6-39 (VKAI…EKNN), 40-73 (YNAW…EPDQ), 75-110 (LAWQ…YRSS), 116-149 (YEIC…KEDE), 237-271 (IYPL…DPLN), 306-339 (PSAW…ATQD), 420-453 (AEGH…KPEN), 456-492 (YHYY…DPFM), 493-527 (SRAF…DDSD), 564-597 (KWAW…DPKD), 598-631 (SNCW…NPDS), 633-665 (YSVY…SGEY), 678-713 (MLAK…RPDL), 743-776 (LLGN…QSTA), 861-894 (VAAW…DPLY), 980-1013 (RTAF…LQER), 1020-1050 (NSAL…PLTE), 1051-1084 (FDDL…AKSD), and 1400-1433 (HNAW…ASQQ).

The polypeptide is Tetratricopeptide repeat protein 37 (ttc37) (Xenopus laevis (African clawed frog)).